A 178-amino-acid chain; its full sequence is Crossover junction endodeoxyribonuclease RuvC (178 aa).

Active-site residues include D11, E71, and D143. The Mg(2+) site is built by D11, E71, and D143.

Belongs to the RuvC family. In terms of assembly, homodimer which binds Holliday junction (HJ) DNA. The HJ becomes 2-fold symmetrical on binding to RuvC with unstacked arms; it has a different conformation from HJ DNA in complex with RuvA. In the full resolvosome a probable DNA-RuvA(4)-RuvB(12)-RuvC(2) complex forms which resolves the HJ. Mg(2+) is required as a cofactor.

The protein localises to the cytoplasm. The catalysed reaction is Endonucleolytic cleavage at a junction such as a reciprocal single-stranded crossover between two homologous DNA duplexes (Holliday junction).. In terms of biological role, the RuvA-RuvB-RuvC complex processes Holliday junction (HJ) DNA during genetic recombination and DNA repair. Endonuclease that resolves HJ intermediates. Cleaves cruciform DNA by making single-stranded nicks across the HJ at symmetrical positions within the homologous arms, yielding a 5'-phosphate and a 3'-hydroxyl group; requires a central core of homology in the junction. The consensus cleavage sequence is 5'-(A/T)TT(C/G)-3'. Cleavage occurs on the 3'-side of the TT dinucleotide at the point of strand exchange. HJ branch migration catalyzed by RuvA-RuvB allows RuvC to scan DNA until it finds its consensus sequence, where it cleaves and resolves the cruciform DNA. This chain is Crossover junction endodeoxyribonuclease RuvC, found in Neisseria meningitidis serogroup B (strain ATCC BAA-335 / MC58).